The primary structure comprises 293 residues: Decaprenyl diphosphate synthase (293 aa).

Residues 1-24 (MATTRGKKTYPQLPPAPDDYPTFP) form a disordered region. D73 is a catalytic residue. D73 lines the Mg(2+) pocket. Substrate-binding positions include 74-77 (GNGR), W78, R86, H90, and 118-120 (STE). N121 (proton acceptor) is an active-site residue. Residues W122, R124, R241, and 247 to 249 (RAS) each bind substrate. Residue E260 participates in Mg(2+) binding.

It belongs to the UPP synthase family. Homodimer. Requires Mg(2+) as cofactor.

It localises to the cell membrane. The enzyme catalyses (2Z,6E)-farnesyl diphosphate + 7 isopentenyl diphosphate = (2Z,6Z,10Z,14Z,18Z,22Z,26Z,30Z,34E)-decaprenyl diphosphate + 7 diphosphate. The catalysed reaction is n isopentenyl diphosphate + (2E,6E)-farnesyl diphosphate = a di-trans,poly-cis-polyprenyl diphosphate + n diphosphate. Functionally, catalyzes the sequential condensation of isopentenyl diphosphate (IPP) in the cis configuration with (2Z,6E)-farnesyl diphosphate (Z-FPP or EZ-FPP) generating the 50 carbon product trans,polycis-decaprenyl diphosphate. When (2E,6E)-farnesyl diphosphate (E-FPP or EE-FPP) is used in vitro, both primary products decaprenyl diphosphate and heptaprenyl diphosphate are synthesized. It is probably due to the fact that M.smegmatis synthesizes both (2E,6E,10E)-geranylgeranyl diphosphate (EEE-GGPP) and (2E,6E,10Z)-geranylgeranyl diphosphate (EEZ-GGPP). Can also accept many different allylic substrates, including E-geranyl diphosphate (E-GPP), neryl diphosphate (NPP), and all-trans-geranyl-geranyl diphosphate. In Mycolicibacterium smegmatis (strain ATCC 700084 / mc(2)155) (Mycobacterium smegmatis), this protein is Decaprenyl diphosphate synthase (uppS).